Here is a 346-residue protein sequence, read N- to C-terminus: RNA-directed DNA methylation 4 (346 aa).

M1 carries the post-translational modification N-acetylmethionine. Acidic residues-rich tracts occupy residues 253–268 (FCDGSDESDYDSEDSN), 278–312 (PEEEEEEEEEDDDDDDDDESEEEKSEASDESDDEE), and 323–332 (GDDEFDDYAE). The disordered stretch occupies residues 253–346 (FCDGSDESDY…YSESDEEFES (94 aa)).

The protein belongs to the IWR1/SLC7A6OS family. As to quaternary structure, interacts with NRPD1. Associates with Pol II and Pol V complexes.

Probable regulatory factor for several RNA polymerases. Effector involved in facilitation of Pol V transcription as RNA scaffold and recruitment of silencing complex to target genomic sites. The polypeptide is RNA-directed DNA methylation 4 (RDM4) (Arabidopsis thaliana (Mouse-ear cress)).